A 24-amino-acid chain; its full sequence is Attacin (24 aa).

It belongs to the attacin/sarcotoxin-2 family.

Its subcellular location is the secreted. Functionally, hemolymph antibacterial protein. The protein is Attacin of Heliothis virescens (Tobacco budworm moth).